We begin with the raw amino-acid sequence, 247 residues long: tRNA pseudouridine synthase A (247 aa).

Aspartate 53 (nucleophile) is an active-site residue. Tyrosine 111 is a substrate binding site.

The protein belongs to the tRNA pseudouridine synthase TruA family. As to quaternary structure, homodimer.

The catalysed reaction is uridine(38/39/40) in tRNA = pseudouridine(38/39/40) in tRNA. In terms of biological role, formation of pseudouridine at positions 38, 39 and 40 in the anticodon stem and loop of transfer RNAs. This is tRNA pseudouridine synthase A from Bacillus velezensis (strain DSM 23117 / BGSC 10A6 / LMG 26770 / FZB42) (Bacillus amyloliquefaciens subsp. plantarum).